A 323-amino-acid polypeptide reads, in one-letter code: tRNA dimethylallyltransferase (323 aa).

12 to 19 (GPTAAGKT) serves as a coordination point for ATP. 14–19 (TAAGKT) provides a ligand contact to substrate. Interaction with substrate tRNA stretches follow at residues 37 to 40 (DSAL) and 161 to 165 (QRLIR).

This sequence belongs to the IPP transferase family. In terms of assembly, monomer. Mg(2+) is required as a cofactor.

It carries out the reaction adenosine(37) in tRNA + dimethylallyl diphosphate = N(6)-dimethylallyladenosine(37) in tRNA + diphosphate. Functionally, catalyzes the transfer of a dimethylallyl group onto the adenine at position 37 in tRNAs that read codons beginning with uridine, leading to the formation of N6-(dimethylallyl)adenosine (i(6)A). The polypeptide is tRNA dimethylallyltransferase (Pseudomonas entomophila (strain L48)).